The following is an 801-amino-acid chain: Phosphatidylinositol 4-kinase beta (801 aa).

Disordered stretches follow at residues 1 to 29, 101 to 121, and 250 to 304; these read MGDT…GGSL, EDEM…RRRQ, and RKRE…EDEP. At Gly-2 the chain carries N-acetylglycine. An interaction with ACBD3 region spans residues 2-68; sequence GDTAVEPAPL…VRLLHGAVAV (67 aa). The 214-residue stretch at 29–242 folds into the PIK helical domain; it reads LLSVITEGVG…GTKLRKLILS (214 aa). Ser-258 carries the phosphoserine modification. Positions 259-268 are enriched in polar residues; it reads PALNTGLSPS. Thr-263 carries the phosphothreonine modification. Residues Ser-266, Ser-275, Ser-277, Ser-284, Ser-294, and Ser-413 each carry the phosphoserine modification. Residues 278 to 294 are compositionally biased toward low complexity; it reads DATASISLSSSLKRTAS. The residue at position 423 (Thr-423) is a Phosphothreonine. Residue Ser-496 is modified to Phosphoserine. 2 positions are modified to phosphothreonine: Thr-502 and Thr-504. Residues 520-786 enclose the PI3K/PI4K catalytic domain; it reads EPWQEKVRRI…MVDGSMRSIT (267 aa). Residues 526–532 are G-loop; that stretch reads VRRIREG. The segment at 653 to 661 is catalytic loop; the sequence is QVKDRHNGN. Residues 672-696 are activation loop; the sequence is HIDFGFILSSSPRNLGFETSAFKLT.

The protein belongs to the PI3/PI4-kinase family. Type III PI4K subfamily. Interacts with ARF1 and ARF3 in the Golgi complex, but not with ARF4, ARF5 or ARF6. Interacts with NCS1/FREQ in a calcium-independent manner. Interacts with CALN1/CABP8 and CALN2/CABP7; in a calcium-dependent manner; this interaction competes with NCS1/FREQ binding. Interacts with ACBD3. Interacts with ARMH3, YWHAB, YWHAE, YWHAG, YWHAH, YWHAQ, YWHAZ and SFN. Interacts with GGA2 (via VHS domain); the interaction is important for PI4KB location at the Golgi apparatus membrane. Interacts with ATG9A. Mg(2+) is required as a cofactor. Requires Mn(2+) as cofactor.

The protein localises to the endomembrane system. It is found in the mitochondrion outer membrane. Its subcellular location is the rough endoplasmic reticulum membrane. The protein resides in the golgi apparatus. It localises to the golgi apparatus membrane. The enzyme catalyses a 1,2-diacyl-sn-glycero-3-phospho-(1D-myo-inositol) + ATP = a 1,2-diacyl-sn-glycero-3-phospho-(1D-myo-inositol 4-phosphate) + ADP + H(+). With respect to regulation, inhibited by wortmannin. Increased kinase activity upon interaction with NCS1/FREQ. Phosphorylates phosphatidylinositol (PI) in the first committed step in the production of the second messenger inositol-1,4,5,-trisphosphate (PIP). May regulate Golgi disintegration/reorganization during mitosis, possibly via its phosphorylation. Involved in Golgi-to-plasma membrane trafficking. May play an important role in the inner ear development. In Sorex araneus (Eurasian common shrew), this protein is Phosphatidylinositol 4-kinase beta (PI4KB).